The primary structure comprises 108 residues: Replication initiation control protein YabA (108 aa).

Positions 83, 85, 99, and 102 each coordinate Zn(2+).

This sequence belongs to the YabA family. As to quaternary structure, homotetramer. Interacts with both DnaA and DnaN, acting as a bridge between these two proteins. Zn(2+) serves as cofactor.

It localises to the cytoplasm. The protein resides in the nucleoid. Its function is as follows. Involved in control of chromosome replication initiation. Inhibits the cooperative binding of DnaA to the oriC region, thus negatively regulating initiation of chromosome replication. Inhibits the ability of DnaA-ATP to form a helix on DNA; does not disassemble preformed DnaA-DNA helices. Decreases the residence time of DnaA on the chromosome at its binding sites (oriC, replication forks and promoter-binding sites). Tethers DnaA to the replication machinery via the DNA polymerase beta sliding clamp subunit (dnaN). Associates with oriC and other DnaA targets on the chromosome in a DnaA-dependent manner. The polypeptide is Replication initiation control protein YabA (Lactococcus lactis subsp. lactis (strain IL1403) (Streptococcus lactis)).